Consider the following 495-residue polypeptide: ATP synthase subunit beta, chloroplastic (495 aa).

172–179 contributes to the ATP binding site; that stretch reads GGAGVGKT.

This sequence belongs to the ATPase alpha/beta chains family. As to quaternary structure, F-type ATPases have 2 components, CF(1) - the catalytic core - and CF(0) - the membrane proton channel. CF(1) has five subunits: alpha(3), beta(3), gamma(1), delta(1), epsilon(1). CF(0) has four main subunits: a(1), b(1), b'(1) and c(9-12).

The protein localises to the plastid. The protein resides in the chloroplast thylakoid membrane. The enzyme catalyses ATP + H2O + 4 H(+)(in) = ADP + phosphate + 5 H(+)(out). Functionally, produces ATP from ADP in the presence of a proton gradient across the membrane. The catalytic sites are hosted primarily by the beta subunits. This chain is ATP synthase subunit beta, chloroplastic, found in Bowiea volubilis (Climbing onion).